The primary structure comprises 540 residues: Phosphoenolpyruvate carboxykinase (ATP) (540 aa).

A substrate-binding site is contributed by Arg-65. Lys-87 carries the N6-acetyllysine modification. Residues Tyr-207 and Lys-213 each contribute to the substrate site. ATP is bound by residues Lys-213, His-232, and Gly-248 to Thr-256. The Mn(2+) site is built by Lys-213 and His-232. Asp-269 is a binding site for Mn(2+). ATP-binding positions include Glu-297, Arg-333, Arg-449–Ile-450, and Thr-455. Arg-333 provides a ligand contact to substrate. Lys-523 is modified (N6-acetyllysine).

Belongs to the phosphoenolpyruvate carboxykinase (ATP) family. Monomer. Mn(2+) serves as cofactor.

The protein resides in the cytoplasm. The enzyme catalyses oxaloacetate + ATP = phosphoenolpyruvate + ADP + CO2. The protein operates within carbohydrate biosynthesis; gluconeogenesis. In terms of biological role, involved in the gluconeogenesis. Catalyzes the conversion of oxaloacetate (OAA) to phosphoenolpyruvate (PEP) through direct phosphoryl transfer between the nucleoside triphosphate and OAA. This Escherichia coli O127:H6 (strain E2348/69 / EPEC) protein is Phosphoenolpyruvate carboxykinase (ATP).